A 500-amino-acid chain; its full sequence is MDSIWILSLLFFIIFLLLAAFKRKNHGKHRRIPSPPGFPIIGNLHQLGELQHQSLWKLSKKYGPVMLLKLGKVPTLILSSSETAKQALRDYDLHCCSRPSLAGGRELSYNNLDMSSSPYNEYWKELRKLCSQELFSANKIQSIQPIKDEEVKKVIDSIAESSSLKNPVNLSKTFLALTTSVVCKAAFGVSFEGSVLNSDRFNKLVRDTFEMLGSFSASDFIPYVGWIIDKFNGLQGWRKKSFRDLDAFYEQIFDLHKEEKEVGSEDLVDVLLRLEKEEIVVGNGKLTRNHIKAILMNILLGGIDTSAITMTWAMAELAKNPRVMKKVQAEIRNQIKNKERISFDDTDKLEYLKMVIKETWRLHPPTPLLLPRDVITEFEINGYTIPAKTRLHVNVWAIGRDPDTWKDPEMFLPERFNDSNIDAKGQNFELLSFGSGRRICPGLYMGTTMVEFGLANMLYHFDWKLPEGMVVEDIDMEEAPGLTVSKKSELVLVPVKYLDH.

A helical membrane pass occupies residues 1–21 (MDSIWILSLLFFIIFLLLAAF). Cys440 provides a ligand contact to heme.

It belongs to the cytochrome P450 family. The cofactor is heme.

It localises to the membrane. This is Cytochrome P450 71B26 (CYP71B26) from Arabidopsis thaliana (Mouse-ear cress).